A 104-amino-acid chain; its full sequence is Flagellar hook-basal body complex protein FliE (104 aa).

This sequence belongs to the FliE family.

The protein resides in the bacterial flagellum basal body. This Pectobacterium carotovorum subsp. carotovorum (strain PC1) protein is Flagellar hook-basal body complex protein FliE.